Here is a 549-residue protein sequence, read N- to C-terminus: Arginine--tRNA ligase (549 aa).

The 'HIGH' region signature appears at 132 to 142 (ANPTGPLHIGH).

The protein belongs to the class-I aminoacyl-tRNA synthetase family. In terms of assembly, monomer.

It is found in the cytoplasm. The enzyme catalyses tRNA(Arg) + L-arginine + ATP = L-arginyl-tRNA(Arg) + AMP + diphosphate. In Paenarthrobacter aurescens (strain TC1), this protein is Arginine--tRNA ligase.